A 991-amino-acid chain; its full sequence is UPF0182 protein RHA1_ro08670 (991 aa).

Helical transmembrane passes span 16–36 (VMIM…RLVV), 61–81 (LILF…AVVW), 115–135 (FTVG…QASW), 170–190 (LILA…LGTH), 214–234 (VQLA…YWLD), 263–283 (RLIM…AIAV), and 291–311 (MATA…PALI). The segment at 902-940 (TGAVATAPGGDATTPPPTGGQPPAPPPPGAPPAPPPATS) is disordered. Residues 903–914 (GAVATAPGGDAT) show a composition bias toward low complexity. Pro residues predominate over residues 915-938 (TPPPTGGQPPAPPPPGAPPAPPPA).

This sequence belongs to the UPF0182 family.

The protein resides in the cell membrane. This chain is UPF0182 protein RHA1_ro08670, found in Rhodococcus jostii (strain RHA1).